The chain runs to 358 residues: MKIPPISILSHTSESYANAISHELGKGFQHAKLVYQEWFRRGNISGLNPAFKNAQALLQNILSLTDFSFLPISQNLTDGQTGKFLIKTIDDLDIKSVLIPMQAGGTLCISSQIGCQMGCAFCETGRMGLLRNLTTQEILSQLFIAKFRLHFSVRNIVFMGMGEPFDNYDTVMHAFRILTDSHGFGLGNNRITISTSGCLEGIYRLLQETTPLPNLAVSLNAPNDELRNKLMPINKKYPLKELYQAIYDFCKQTSKQVLIAYVLIKEQNDSIEHAKQLTNFLSGLNVKINLIPYNPQSRDRFQSPEQSTLENFTSYLREKGFYTLLRQTKGQKIMAACGQLGNLELKRKKPFILPILKE.

The region spanning 101 to 326 is the Radical SAM core domain; the sequence is MQAGGTLCIS…REKGFYTLLR (226 aa). C108 and C337 are disulfide-bonded. [4Fe-4S] cluster is bound by residues C115, C119, and C122. S-adenosyl-L-methionine-binding positions include 162-163, S194, 218-220, and N294; these read GE and SLN. The S-methylcysteine intermediate role is filled by C337.

It belongs to the radical SAM superfamily. RlmN family. Requires [4Fe-4S] cluster as cofactor.

The protein resides in the cytoplasm. It carries out the reaction adenosine(2503) in 23S rRNA + 2 reduced [2Fe-2S]-[ferredoxin] + 2 S-adenosyl-L-methionine = 2-methyladenosine(2503) in 23S rRNA + 5'-deoxyadenosine + L-methionine + 2 oxidized [2Fe-2S]-[ferredoxin] + S-adenosyl-L-homocysteine. The catalysed reaction is adenosine(37) in tRNA + 2 reduced [2Fe-2S]-[ferredoxin] + 2 S-adenosyl-L-methionine = 2-methyladenosine(37) in tRNA + 5'-deoxyadenosine + L-methionine + 2 oxidized [2Fe-2S]-[ferredoxin] + S-adenosyl-L-homocysteine. In terms of biological role, specifically methylates position 2 of adenine 2503 in 23S rRNA and position 2 of adenine 37 in tRNAs. This is Probable dual-specificity RNA methyltransferase RlmN 1 from Protochlamydia amoebophila (strain UWE25).